Here is a 107-residue protein sequence, read N- to C-terminus: IQ domain-containing protein F6 (107 aa).

The IQ domain occupies 42–71; the sequence is QEWAVVKVQAQVRMWQARRRFLQARQAACI.

This is IQ domain-containing protein F6 (IQCF6) from Homo sapiens (Human).